The primary structure comprises 504 residues: ATP-dependent RNA helicase DBP3 (504 aa).

Residues 1–14 (MSKDELKDKKRKVE) are compositionally biased toward basic and acidic residues. The tract at residues 1–65 (MSKDELKDKK…KSETESFAAS (65 aa)) is disordered. The segment covering 20-53 (SKKKLKKDKKDKKDKKDKKDKKDKKEKKEKKEKK) has biased composition (basic residues). Residues 94–120 (LDFSQVSFIDQIQKEISKFPKPTPIQA) carry the Q motif motif. One can recognise a Helicase ATP-binding domain in the interval 123-296 (WPYLLAGKDV…SSFMSEPVKV (174 aa)). 136 to 143 (AETGSGKT) contacts ATP. Residues 243 to 246 (DEAD) carry the DEAD box motif. The Helicase C-terminal domain maps to 325–474 (KLLELLKKYH…PVPEELKKFG (150 aa)).

The protein belongs to the DEAD box helicase family. DDX5/DBP2 subfamily.

It is found in the nucleus. The protein localises to the nucleolus. The catalysed reaction is ATP + H2O = ADP + phosphate + H(+). ATP-dependent RNA helicase required for 60S ribosomal subunit synthesis. Involved in efficient pre-rRNA processing, predominantly at site A3, which is necessary for the normal formation of 25S and 5.8S rRNAs. The polypeptide is ATP-dependent RNA helicase DBP3 (DBP3) (Kluyveromyces lactis (strain ATCC 8585 / CBS 2359 / DSM 70799 / NBRC 1267 / NRRL Y-1140 / WM37) (Yeast)).